Reading from the N-terminus, the 255-residue chain is Imidazole glycerol phosphate synthase subunit HisF (255 aa).

Active-site residues include D11 and D130.

Belongs to the HisA/HisF family. As to quaternary structure, heterodimer of HisH and HisF.

It is found in the cytoplasm. It catalyses the reaction 5-[(5-phospho-1-deoxy-D-ribulos-1-ylimino)methylamino]-1-(5-phospho-beta-D-ribosyl)imidazole-4-carboxamide + L-glutamine = D-erythro-1-(imidazol-4-yl)glycerol 3-phosphate + 5-amino-1-(5-phospho-beta-D-ribosyl)imidazole-4-carboxamide + L-glutamate + H(+). The protein operates within amino-acid biosynthesis; L-histidine biosynthesis; L-histidine from 5-phospho-alpha-D-ribose 1-diphosphate: step 5/9. IGPS catalyzes the conversion of PRFAR and glutamine to IGP, AICAR and glutamate. The HisF subunit catalyzes the cyclization activity that produces IGP and AICAR from PRFAR using the ammonia provided by the HisH subunit. The protein is Imidazole glycerol phosphate synthase subunit HisF of Akkermansia muciniphila (strain ATCC BAA-835 / DSM 22959 / JCM 33894 / BCRC 81048 / CCUG 64013 / CIP 107961 / Muc).